We begin with the raw amino-acid sequence, 124 residues long: Large ribosomal subunit protein bL19 (124 aa).

Belongs to the bacterial ribosomal protein bL19 family.

Its function is as follows. This protein is located at the 30S-50S ribosomal subunit interface and may play a role in the structure and function of the aminoacyl-tRNA binding site. The sequence is that of Large ribosomal subunit protein bL19 from Zymomonas mobilis subsp. mobilis (strain ATCC 31821 / ZM4 / CP4).